The chain runs to 119 residues: Large ribosomal subunit protein eL8 (119 aa).

Belongs to the eukaryotic ribosomal protein eL8 family. As to quaternary structure, part of the 50S ribosomal subunit. Probably part of the RNase P complex.

Its subcellular location is the cytoplasm. Functionally, multifunctional RNA-binding protein that recognizes the K-turn motif in ribosomal RNA, the RNA component of RNase P, box H/ACA, box C/D and box C'/D' sRNAs. In Archaeoglobus fulgidus (strain ATCC 49558 / DSM 4304 / JCM 9628 / NBRC 100126 / VC-16), this protein is Large ribosomal subunit protein eL8.